The primary structure comprises 178 residues: uncharacterized protein (178 aa).

The segment at 1-89 (MSAKEGSSHP…GEKKGKTEKL (89 aa)) is disordered. Composition is skewed to basic and acidic residues over residues 44–53 (PYQKNEKVVV) and 61–89 (AFLHPEEAEAKKESEKPSDGEKKGKTEKL).

This is an uncharacterized protein from Schizosaccharomyces pombe (strain 972 / ATCC 24843) (Fission yeast).